Reading from the N-terminus, the 307-residue chain is MNKGVMRPGHVQLRVLDMSKALEHYVELLGLIEMDRDDQGRVYLKAWTEVDKFSLVLREADEPGMDFMGFKVVDEDALRQLERDLMAYGCAVEQLPAGELNSCGRRVRFQAPSGHHFELYADKEYTGKWGLNDVNPEAWPRDLKGMAAVRFDHALMYGDELPATYDLFTKVLGFYLAEQVLDENGTRVAQFLSLSTKAHDVAFIHHPEKGRLHHVSFHLETWEDLLRAADLISMTDTSIDIGPTRHGLTHGKTIYFFDPSGNRNEVFCGGDYNYPDHKPVTWTTDQLGKAIFYHDRILNERFMTVLT.

VOC domains follow at residues 7–122 (RPGH…LYAD) and 150–269 (RFDH…VFCG). Fe cation contacts are provided by H153, H214, and E265.

Belongs to the extradiol ring-cleavage dioxygenase family. Homotetramer. Fe(2+) is required as a cofactor.

The enzyme catalyses catechol + O2 = (2Z,4E)-2-hydroxy-6-oxohexa-2,4-dienoate + H(+). It participates in xenobiotic degradation; toluene degradation. This is Metapyrocatechase (xylE) from Pseudomonas putida (Arthrobacter siderocapsulatus).